A 318-amino-acid chain; its full sequence is MTDKVQTTLLFLAIGEFSVGILGNAFIGLVNCMDWVKKRKIASIDLILTSLAISRICLLCVILLDCFMLVLYPDVYATGKQMRIIDFFWTLTNHLSIWFATCLSIYYFFKIANFFHPLFLWMKWRIDRVISWILLGCMVLSVFINLPATENLNADFRRCVKAKRKTNLTWSCRVTKAQHASTKLFLNLVTLLPFSVCLMSFFLLILSLWRHIRRMQLSATGCRDPSTEAHVRALKAVISFLLLFIAYYLSFLIATSSYFIPETELAVIFGEFIALIYPSSHSFILILGNSKLRRASLKVLWTVMSILKGRKFQQHKQI.

Residues 1-9 are Extracellular-facing; the sequence is MTDKVQTTL. A helical membrane pass occupies residues 10–30; that stretch reads LFLAIGEFSVGILGNAFIGLV. Residues 31–55 are Cytoplasmic-facing; sequence NCMDWVKKRKIASIDLILTSLAISR. A helical membrane pass occupies residues 56–76; the sequence is ICLLCVILLDCFMLVLYPDVY. At 77–94 the chain is on the extracellular side; the sequence is ATGKQMRIIDFFWTLTNH. The helical transmembrane segment at 95 to 115 threads the bilayer; that stretch reads LSIWFATCLSIYYFFKIANFF. The Cytoplasmic portion of the chain corresponds to 116–128; that stretch reads HPLFLWMKWRIDR. The chain crosses the membrane as a helical span at residues 129–149; that stretch reads VISWILLGCMVLSVFINLPAT. The Extracellular segment spans residues 150-187; that stretch reads ENLNADFRRCVKAKRKTNLTWSCRVTKAQHASTKLFLN. Asn-167 is a glycosylation site (N-linked (GlcNAc...) asparagine). Residues 188 to 208 traverse the membrane as a helical segment; that stretch reads LVTLLPFSVCLMSFFLLILSL. The Cytoplasmic portion of the chain corresponds to 209–235; that stretch reads WRHIRRMQLSATGCRDPSTEAHVRALK. Residues 236 to 256 form a helical membrane-spanning segment; the sequence is AVISFLLLFIAYYLSFLIATS. Residues 257-266 are Extracellular-facing; sequence SYFIPETELA. The chain crosses the membrane as a helical span at residues 267–287; sequence VIFGEFIALIYPSSHSFILIL. At 288-318 the chain is on the cytoplasmic side; the sequence is GNSKLRRASLKVLWTVMSILKGRKFQQHKQI.

The protein belongs to the G-protein coupled receptor T2R family.

It is found in the membrane. Its function is as follows. Gustducin-coupled receptor implicated in the perception of bitter compounds in the oral cavity and the gastrointestinal tract. Signals through PLCB2 and the calcium-regulated cation channel TRPM5. This Macaca mulatta (Rhesus macaque) protein is Taste receptor type 2 member 7 (TAS2R7).